The primary structure comprises 412 residues: DNA polymerase IV (412 aa).

In terms of domain architecture, UmuC spans 12 to 193 (ILHVDMNCFF…LPVGAMHGIG (182 aa)). Mg(2+)-binding residues include aspartate 16 and aspartate 112. The active site involves glutamate 113. The interval 235 to 257 (KGMDDREVDPSQMGQHKSVGNSM) is disordered. The span at 246 to 257 (QMGQHKSVGNSM) shows a compositional bias: polar residues.

This sequence belongs to the DNA polymerase type-Y family. Monomer. The cofactor is Mg(2+).

Its subcellular location is the cytoplasm. The enzyme catalyses DNA(n) + a 2'-deoxyribonucleoside 5'-triphosphate = DNA(n+1) + diphosphate. In terms of biological role, poorly processive, error-prone DNA polymerase involved in untargeted mutagenesis. Copies undamaged DNA at stalled replication forks, which arise in vivo from mismatched or misaligned primer ends. These misaligned primers can be extended by PolIV. Exhibits no 3'-5' exonuclease (proofreading) activity. May be involved in translesional synthesis, in conjunction with the beta clamp from PolIII. This Bacillus anthracis protein is DNA polymerase IV.